Here is a 317-residue protein sequence, read N- to C-terminus: MIVVTGAAGFIGSNLVKALNDMGRNDIIAVDDLTDGTKMFNLADCEIADYLDKDQFLEQIIAGEFDGKIEVIFHQGACSSTTEWDGKFMMSNNYEYSKTLLQFCDRTKCQYIYASSASVYGGSEKFIEQRDLEKPLNVYAYSKFLFDQYVRQQKPNCQVAGLRYFNVYGPREQHKGGMASVAFHFNNQLNANGICRLFEGVDGYENGQQLRDFVYVEDVVKVNLWLWQNSEVSGIFNCGTGQAQSFNDVANAVIAHHGKGAVEYIPFPDKLKGAYQSYTQADLTKLRAAGYTAEFKTVEQAVPEYLSWLATQHFIGE.

NADP(+)-binding positions include 10-11 (FI), 31-32 (DD), K38, K53, 75-79 (QGACS), and N92. The Proton acceptor role is filled by Y139. K143 contributes to the NADP(+) binding site. N166 is a binding site for substrate. Residues V167 and K175 each coordinate NADP(+). Catalysis depends on K175, which acts as the Proton acceptor. Substrate is bound by residues G177, H184, 198–201 (FEGV), R211, and Y275.

It belongs to the NAD(P)-dependent epimerase/dehydratase family. HldD subfamily. Homopentamer. NADP(+) is required as a cofactor.

It carries out the reaction ADP-D-glycero-beta-D-manno-heptose = ADP-L-glycero-beta-D-manno-heptose. It participates in nucleotide-sugar biosynthesis; ADP-L-glycero-beta-D-manno-heptose biosynthesis; ADP-L-glycero-beta-D-manno-heptose from D-glycero-beta-D-manno-heptose 7-phosphate: step 4/4. Its function is as follows. Catalyzes the interconversion between ADP-D-glycero-beta-D-manno-heptose and ADP-L-glycero-beta-D-manno-heptose via an epimerization at carbon 6 of the heptose. The chain is ADP-L-glycero-D-manno-heptose-6-epimerase from Shewanella piezotolerans (strain WP3 / JCM 13877).